Consider the following 1859-residue polypeptide: Protein TIC 214 (1859 aa).

6 helical membrane-spanning segments follow: residues 18-38 (IINSVVVVGLYYGFLTTFSIG), 64-84 (FITGQLMMFISIYYAPLHLAL), 87-107 (PHTITVLALPYLLFHFFWNNH), 124-144 (LSIQCVFLNNLIFQLFNHFIL), 172-192 (VGWLIGHILFMKWVGLVLFWI), and 221-241 (IFSILLFITCVYYLGRMPAPI). Positions 247–314 (KETSKTEERG…TEEIRVNGKE (68 aa)) are disordered. Positions 256–268 (GESEEERDVEIET) are enriched in acidic residues. A compositionally biased stretch (basic and acidic residues) spans 273-284 (KGTKQEQERSTE). Residues 295 to 306 (EKEDPDKIDETE) are compositionally biased toward acidic residues.

Belongs to the TIC214 family. As to quaternary structure, part of the Tic complex.

The protein localises to the plastid. It is found in the chloroplast inner membrane. Its function is as follows. Involved in protein precursor import into chloroplasts. May be part of an intermediate translocation complex acting as a protein-conducting channel at the inner envelope. The sequence is that of Protein TIC 214 from Buxus microphylla (Littleleaf boxwood).